Here is a 370-residue protein sequence, read N- to C-terminus: Cysteine-type anaerobic sulfatase-maturating enzyme (370 aa).

Residues 1–227 (MPPLSLLIKP…LKNLFDFWYE (227 aa)) form the Radical SAM core domain. Residues Cys-15 and Cys-19 each contribute to the [4Fe-4S] cluster site. Tyr-21 serves as a coordination point for S-adenosyl-L-methionine. Residue Cys-22 coordinates [4Fe-4S] cluster. 4 residues coordinate S-adenosyl-L-methionine: Gly-66, Ser-122, Arg-134, and Leu-195. Residues Cys-255, Cys-261, and Cys-276 each contribute to the [4Fe-4S] cluster site. The Proton acceptor role is filled by Asp-277. [4Fe-4S] cluster is bound by residues Cys-317, Cys-320, Cys-326, Cys-330, and Cys-348.

Belongs to the radical SAM superfamily. Anaerobic sulfatase-maturating enzyme family. As to quaternary structure, monomer. Requires [4Fe-4S] cluster as cofactor.

The catalysed reaction is L-cysteinyl-[sulfatase] + S-adenosyl-L-methionine + H2O = 3-oxo-L-alanyl-[sulfatase] + hydrogen sulfide + 5'-deoxyadenosine + L-methionine + 2 H(+). Its pathway is protein modification; sulfatase oxidation. Involved in 'Cys-type' sulfatase maturation under anaerobic conditions. Catalyzes the post-translational modification of cysteine ('Cys-51' in the arylsulfatase CPF_0221) into 3-oxoalanine (also known as C(alpha)-formylglycine (FGly)), by a free radical chemical mechanism initiated via the reductive cleavage of S-adenosyl-L-methionine (SAM). Is also able to oxidize a serine residue in a synthetic substrate to FGly in vitro, and in a serine variant of a Cys-type sulfatase in vivo, but this activity is not physiological. Converts threonyl peptides to the corresponding ketone product, and also allo-threonyl peptides, but with a significantly reduced efficiency. This Clostridium perfringens (strain ATCC 13124 / DSM 756 / JCM 1290 / NCIMB 6125 / NCTC 8237 / Type A) protein is Cysteine-type anaerobic sulfatase-maturating enzyme.